Reading from the N-terminus, the 513-residue chain is Bifunctional purine biosynthesis protein PurH (513 aa).

An MGS-like domain is found at 1-144 (MKRALVSVSD…KNYRDVTIVV (144 aa)).

Belongs to the PurH family.

The enzyme catalyses (6R)-10-formyltetrahydrofolate + 5-amino-1-(5-phospho-beta-D-ribosyl)imidazole-4-carboxamide = 5-formamido-1-(5-phospho-D-ribosyl)imidazole-4-carboxamide + (6S)-5,6,7,8-tetrahydrofolate. The catalysed reaction is IMP + H2O = 5-formamido-1-(5-phospho-D-ribosyl)imidazole-4-carboxamide. It functions in the pathway purine metabolism; IMP biosynthesis via de novo pathway; 5-formamido-1-(5-phospho-D-ribosyl)imidazole-4-carboxamide from 5-amino-1-(5-phospho-D-ribosyl)imidazole-4-carboxamide (10-formyl THF route): step 1/1. It participates in purine metabolism; IMP biosynthesis via de novo pathway; IMP from 5-formamido-1-(5-phospho-D-ribosyl)imidazole-4-carboxamide: step 1/1. The chain is Bifunctional purine biosynthesis protein PurH from Lactobacillus delbrueckii subsp. bulgaricus (strain ATCC BAA-365 / Lb-18).